We begin with the raw amino-acid sequence, 144 residues long: MTEQKHEKKISPRRRARECAVQALYSWYVSQNSPAEIELNFMAEQDLKGVDTAYFRRLFRQTAENVDAVDNIMIPYLDREVSELDPIEKAILRLAVYELKFELDVPYKVVINEAIEVAKVFGAEDSHKYVNGVLDKVAPVLSRK.

The protein belongs to the NusB family.

Its function is as follows. Involved in transcription antitermination. Required for transcription of ribosomal RNA (rRNA) genes. Binds specifically to the boxA antiterminator sequence of the ribosomal RNA (rrn) operons. The polypeptide is Transcription antitermination protein NusB (Pasteurella multocida (strain Pm70)).